Here is a 326-residue protein sequence, read N- to C-terminus: uncharacterized protein (326 aa).

It belongs to the transferase hexapeptide repeat family.

This is an uncharacterized protein from Escherichia coli (strain K12).